A 327-amino-acid polypeptide reads, in one-letter code: Aspartate--ammonia ligase (327 aa).

It belongs to the class-II aminoacyl-tRNA synthetase family. AsnA subfamily.

It localises to the cytoplasm. It carries out the reaction L-aspartate + NH4(+) + ATP = L-asparagine + AMP + diphosphate + H(+). The protein operates within amino-acid biosynthesis; L-asparagine biosynthesis; L-asparagine from L-aspartate (ammonia route): step 1/1. The sequence is that of Aspartate--ammonia ligase from Bacillus cereus (strain AH820).